Reading from the N-terminus, the 127-residue chain is Fluoride-specific ion channel FluC (127 aa).

Transmembrane regions (helical) follow at residues 4–24, 35–55, 71–91, and 103–123; these read LLLA…LLSM, LGTL…FAWF, TGFC…VFLL, and VFVN…LFSA. 2 residues coordinate Na(+): glycine 75 and threonine 78.

It belongs to the fluoride channel Fluc/FEX (TC 1.A.43) family.

Its subcellular location is the cell inner membrane. It catalyses the reaction fluoride(in) = fluoride(out). Na(+) is not transported, but it plays an essential structural role and its presence is essential for fluoride channel function. Its function is as follows. Fluoride-specific ion channel. Important for reducing fluoride concentration in the cell, thus reducing its toxicity. In Escherichia coli (strain K12 / MC4100 / BW2952), this protein is Fluoride-specific ion channel FluC.